The following is a 601-amino-acid chain: Glutathione-regulated potassium-efflux system protein KefB (601 aa).

Transmembrane regions (helical) follow at residues 4-24 (ADLLTAGVLFLFAAVAAVPLA), 29-49 (IGAVLGYLLAGIAIGPWGLGF), 55-75 (EILHFSELGVVFLMFIIGLEL), 87-107 (IFGVGAAQVLLSAAVLAGLLM), 111-131 (FLWQAAVVGGIGLAMSSTAMA), 152-172 (VLLFQDLAVIPALALVPLLAG), 177-197 (HFDWFKVAMKVLAFAVMLIGG), 207-227 (FIAASGVREVFTAATLLLVLS), 230-250 (LFMDALGLSMALGTFIAGVLL), 262-282 (AIDPFKGLLLGLFFISVGMSL), 284-304 (LGVLYTHLLWVAASVVILVVI), 324-344 (MQFASVLSQGGEFAFVLFSTA), and 356-376 (ALLLVTVTLSMMTTPLLMKGI). The region spanning 400–519 (KPQVIVVGFG…AGVTQFSRET (120 aa)) is the RCK N-terminal domain.

The protein belongs to the monovalent cation:proton antiporter 2 (CPA2) transporter (TC 2.A.37) family. KefB subfamily. As to quaternary structure, interacts with the regulatory subunit KefG.

Its subcellular location is the cell inner membrane. Its function is as follows. Pore-forming subunit of a potassium efflux system that confers protection against electrophiles. Catalyzes K(+)/H(+) antiport. This is Glutathione-regulated potassium-efflux system protein KefB from Salmonella paratyphi C (strain RKS4594).